The primary structure comprises 196 residues: Glycerol-3-phosphate acyltransferase (196 aa).

5 helical membrane-spanning segments follow: residues 1–21, 55–75, 81–101, 118–138, and 140–160; these read MIIF…SISG, IAIF…WLGT, PIYL…PIYF, AISI…VYLF, and YASL…WYIQ.

This sequence belongs to the PlsY family. In terms of assembly, probably interacts with PlsX.

The protein localises to the cell inner membrane. The enzyme catalyses an acyl phosphate + sn-glycerol 3-phosphate = a 1-acyl-sn-glycero-3-phosphate + phosphate. Its pathway is lipid metabolism; phospholipid metabolism. In terms of biological role, catalyzes the transfer of an acyl group from acyl-phosphate (acyl-PO(4)) to glycerol-3-phosphate (G3P) to form lysophosphatidic acid (LPA). This enzyme utilizes acyl-phosphate as fatty acyl donor, but not acyl-CoA or acyl-ACP. The protein is Glycerol-3-phosphate acyltransferase of Blochmanniella floridana.